A 409-amino-acid chain; its full sequence is Chaetoglobosin A biosynthesis cluster protein C (409 aa).

One can recognise an HTH CENPB-type domain in the interval 51 to 120 (DLPANSRKLT…VKRQPQLRTR (70 aa)). The H-T-H motif DNA-binding region spans 84 to 113 (RGVEDMANHLLRERDAPPVGKLWAHNFVKR). 2 disordered regions span residues 243-269 (PTHP…ETRS) and 320-350 (ANEP…QDPL). A compositionally biased stretch (polar residues) spans 255–269 (PWASKTPYNAQETRS).

It localises to the nucleus. Part of the gene cluster that mediates the biosynthesis of chaetoglobosin A which has a unique inhibitory activity against actin polymerization in mammalian cells. Chaetoglobosin A and its intermediates are involved in the morphological differentiation of C.globosum. The first step of the pathway is the synthesis of prochaetoglobosin I via condensation of one acetyl-CoA, 8 malonyl-CoA, and a L-tryptophan molecule by the PKS-NRPS hybrid synthetase cheA, followed by reduction of backbone double bond to install desired geometry by the enoyl reductase cheB. Further multiple oxidation steps performed by the cytochrome P450 monooxygenases cheE and cheG, as well as by the FAD-linked oxidoreductase cheF, lead to the formation of chaetoglobosin A. Depending on the order of action of these reductases, distinct intermediates can be identified. Within the pathway, the cytochrome P450 monooxygenase cheE catalyzes a stereospecific epoxidation on prochaetoglobosin I, cytoglobosin D, and chaetoglobosin J intermediates. The FAD-linked oxidoreductase cheF performs dehydrogenation of the C-20 hydroxyl groups in the 20-dihyrochaetoglobosin A and cytoglobosin D intermediates. Finally, the cytochrome P450 monooxygenase cheG can catalyze the stereospecific dihydroxylation of prochaetoglobosin I and prochaetoglobosin IV at C-19 and C-20, respectively. The Diels-Alderase cheD may play a role in the post-PKS-NRPS biosynthetic steps catalyzing Diels-Alder cyclization. This Chaetomium globosum (strain ATCC 6205 / CBS 148.51 / DSM 1962 / NBRC 6347 / NRRL 1970) (Soil fungus) protein is Chaetoglobosin A biosynthesis cluster protein C.